The chain runs to 484 residues: Cysteine desulfurase, mitochondrial (484 aa).

Residues 29–42 show a composition bias toward low complexity; the sequence is LATSASTSSSTTTS. Residues 29–69 form a disordered region; it reads LATSASTSSSTTTSNAETGELHVSTPLDSPSVHPPDGSSIS. Residues 153 to 154, N233, Q261, and 281 to 283 contribute to the pyridoxal 5'-phosphate site; these read AT and SSH. K284 is subject to N6-(pyridoxal phosphate)lysine. T321 is a pyridoxal 5'-phosphate binding site. C408 serves as the catalytic Cysteine persulfide intermediate. [2Fe-2S] cluster is bound at residue C408.

Belongs to the class-V pyridoxal-phosphate-dependent aminotransferase family. NifS/IscS subfamily. The cofactor is pyridoxal 5'-phosphate.

The protein localises to the mitochondrion. The enzyme catalyses (sulfur carrier)-H + L-cysteine = (sulfur carrier)-SH + L-alanine. Functionally, catalyzes the removal of elemental sulfur from cysteine to produce alanine. It supplies the inorganic sulfur for iron-sulfur (Fe-S) clusters. Plays a role in both tRNA-processing and mitochondrial metabolism. Involved in the 2-thio-modification of both 5-carboxymethylaminomethyl-2-thiouridine in mitochondrial tRNAs and 5-methoxycarbonylmethyl-2-thiouridine (mcm5s2U) in cytoplasmic tRNAs. The polypeptide is Cysteine desulfurase, mitochondrial (Candida maltosa (Yeast)).